Reading from the N-terminus, the 431-residue chain is Glutamate-1-semialdehyde 2,1-aminomutase 2 (431 aa).

K268 carries the post-translational modification N6-(pyridoxal phosphate)lysine.

Belongs to the class-III pyridoxal-phosphate-dependent aminotransferase family. HemL subfamily. As to quaternary structure, homodimer. The cofactor is pyridoxal 5'-phosphate.

It localises to the cytoplasm. It carries out the reaction (S)-4-amino-5-oxopentanoate = 5-aminolevulinate. It participates in porphyrin-containing compound metabolism; protoporphyrin-IX biosynthesis; 5-aminolevulinate from L-glutamyl-tRNA(Glu): step 2/2. This is Glutamate-1-semialdehyde 2,1-aminomutase 2 from Anoxybacillus flavithermus (strain DSM 21510 / WK1).